The sequence spans 254 residues: 5'/3'-nucleotidase SurE (254 aa).

The a divalent metal cation site is built by Asp-9, Asp-10, Ser-40, and Asn-93.

This sequence belongs to the SurE nucleotidase family. A divalent metal cation serves as cofactor.

The protein localises to the cytoplasm. The catalysed reaction is a ribonucleoside 5'-phosphate + H2O = a ribonucleoside + phosphate. The enzyme catalyses a ribonucleoside 3'-phosphate + H2O = a ribonucleoside + phosphate. It catalyses the reaction [phosphate](n) + H2O = [phosphate](n-1) + phosphate + H(+). Nucleotidase with a broad substrate specificity as it can dephosphorylate various ribo- and deoxyribonucleoside 5'-monophosphates and ribonucleoside 3'-monophosphates with highest affinity to 3'-AMP. Also hydrolyzes polyphosphate (exopolyphosphatase activity) with the preference for short-chain-length substrates (P20-25). Might be involved in the regulation of dNTP and NTP pools, and in the turnover of 3'-mononucleotides produced by numerous intracellular RNases (T1, T2, and F) during the degradation of various RNAs. The chain is 5'/3'-nucleotidase SurE from Proteus mirabilis (strain HI4320).